A 377-amino-acid polypeptide reads, in one-letter code: Chaperone protein DnaJ (377 aa).

One can recognise a J domain in the interval 5-69 (DYYEVLGISK…QKRAQYDQYG (65 aa)). The segment at 134-216 (GKDAEIEIPR…CHGKGRVTKT (83 aa)) adopts a CR-type zinc-finger fold. Residues cysteine 147, cysteine 150, cysteine 164, cysteine 167, cysteine 190, cysteine 193, cysteine 204, and cysteine 207 each contribute to the Zn(2+) site. CXXCXGXG motif repeat units follow at residues 147–154 (CDTCHGSG), 164–171 (CSHCGGKG), 190–197 (CQYCNGTG), and 204–211 (CPTCHGKG).

The protein belongs to the DnaJ family. In terms of assembly, homodimer. Requires Zn(2+) as cofactor.

The protein localises to the cytoplasm. Functionally, participates actively in the response to hyperosmotic and heat shock by preventing the aggregation of stress-denatured proteins and by disaggregating proteins, also in an autonomous, DnaK-independent fashion. Unfolded proteins bind initially to DnaJ; upon interaction with the DnaJ-bound protein, DnaK hydrolyzes its bound ATP, resulting in the formation of a stable complex. GrpE releases ADP from DnaK; ATP binding to DnaK triggers the release of the substrate protein, thus completing the reaction cycle. Several rounds of ATP-dependent interactions between DnaJ, DnaK and GrpE are required for fully efficient folding. Also involved, together with DnaK and GrpE, in the DNA replication of plasmids through activation of initiation proteins. The sequence is that of Chaperone protein DnaJ from Listeria monocytogenes serotype 1/2a (strain 10403S).